The primary structure comprises 263 residues: MAPK-interacting and spindle-stabilizing protein (263 aa).

The disordered stretch occupies residues Gly13–Thr238. Composition is skewed to pro residues over residues Ser14–Gly34 and Gly140–Pro155. Over residues Ser156–Leu165 the composition is skewed to low complexity. The segment covering Pro176 to Thr189 has biased composition (polar residues). Residues Ile202–Arg213 are compositionally biased toward basic residues.

This sequence belongs to the MISS family. Interacts with MAPK1. Phosphorylated in vitro by MAPK1.

Its subcellular location is the cytoplasm. The protein resides in the cytoskeleton. The protein localises to the spindle. In terms of biological role, involved in the maintenance of the spindle integrity during the cytostatic factor (CSF) arrest of oocytes. In Mus musculus (Mouse), this protein is MAPK-interacting and spindle-stabilizing protein (Mapk1ip1).